The following is a 922-amino-acid chain: GPI inositol-deacylase (922 aa).

Over 1 to 11 (MFLHSVNLWNL) the chain is Cytoplasmic. The helical transmembrane segment at 12 to 32 (AFYVFMVFLATLGLWDVFFGF) threads the bilayer. Over 33–597 (EENKCSMSYM…GQVVRFHGGA (565 aa)) the chain is Lumenal. Ser174 is a catalytic residue. 3 N-linked (GlcNAc...) asparagine glycosylation sites follow: Asn363, Asn402, and Asn558. A helical membrane pass occupies residues 598-618 (LPAYVVSSILLAYGGQLYSLL). Residues 619–641 (STGFCLEYGTMLDKEAKPYKVDP) lie on the Cytoplasmic side of the membrane. Residues 642 to 662 (FVIMIKFLLGYKWFKELWDAV) traverse the membrane as a helical segment. Residues 663-668 (LLPELD) lie on the Lumenal side of the membrane. Residues 669–689 (AIVLTSQSMCFPLVSLILFLF) form a helical membrane-spanning segment. The Cytoplasmic portion of the chain corresponds to 690-694 (GTCTA). A helical membrane pass occupies residues 695–715 (YWSGLLSSASVQLLSSLWLAL). Over 716–733 (KRPAELPKDVKVMSPDLP) the chain is Lumenal. Residues 734 to 754 (VLTVVFLIISWTTCGALAILL) form a helical membrane-spanning segment. Residues 755–816 (SYLYYVFKVV…NDAEDSLRMH (62 aa)) lie on the Cytoplasmic side of the membrane. The tract at residues 776–801 (NQPVNPKHSRRSEKKSNHHKDSAIQN) is disordered. Residues 782-793 (KHSRRSEKKSNH) are compositionally biased toward basic residues. Residues 817–837 (STVINLLTWVVLLSMPSLIYW) traverse the membrane as a helical segment. Residues 838–853 (SKNLRYYFKLNPDPCK) are Lumenal-facing. A helical transmembrane segment spans residues 854 to 874 (PLAFLLIPAIAVLGNTHTVSI). Topologically, residues 875–894 (KSSKLLKTASQFPLPLAVGV) are cytoplasmic. The helical transmembrane segment at 895 to 915 (IAFGSSHLYRVPCFVIIPLVF) threads the bilayer. The Lumenal segment spans residues 916–922 (HSLCNFM).

Belongs to the GPI inositol-deacylase family.

Its subcellular location is the endoplasmic reticulum membrane. Functionally, GPI inositol-deacylase that catalyzes the remove of the acyl chain linked to the 2-OH position of inositol ring from the GPI-anchored protein (GPI-AP) in the endoplasmic reticulum. Initiates the post-attachment remodeling phase of GPI-AP biogenesis and participates in endoplasmic reticulum (ER)-to-Golgi transport of GPI-anchored protein. The chain is GPI inositol-deacylase from Rattus norvegicus (Rat).